The following is a 738-amino-acid chain: Ribosomal RNA large subunit methyltransferase K/L (738 aa).

The THUMP domain maps to Thr-46–Leu-157.

It belongs to the methyltransferase superfamily. RlmKL family.

It is found in the cytoplasm. It catalyses the reaction guanosine(2445) in 23S rRNA + S-adenosyl-L-methionine = N(2)-methylguanosine(2445) in 23S rRNA + S-adenosyl-L-homocysteine + H(+). It carries out the reaction guanosine(2069) in 23S rRNA + S-adenosyl-L-methionine = N(2)-methylguanosine(2069) in 23S rRNA + S-adenosyl-L-homocysteine + H(+). In terms of biological role, specifically methylates the guanine in position 2445 (m2G2445) and the guanine in position 2069 (m7G2069) of 23S rRNA. This chain is Ribosomal RNA large subunit methyltransferase K/L, found in Methylococcus capsulatus (strain ATCC 33009 / NCIMB 11132 / Bath).